Consider the following 55-residue polypeptide: Large ribosomal subunit protein bL33B (55 aa).

It belongs to the bacterial ribosomal protein bL33 family.

The protein is Large ribosomal subunit protein bL33B (rpmG2) of Mycobacterium tuberculosis (strain CDC 1551 / Oshkosh).